Consider the following 107-residue polypeptide: Anti-adapter protein IraM (107 aa).

It belongs to the IraM/RssC family.

Its subcellular location is the cytoplasm. Its function is as follows. Inhibits RpoS proteolysis by regulating RssB activity, thereby increasing the stability of the sigma stress factor RpoS during magnesium starvation. The protein is Anti-adapter protein IraM of Shigella dysenteriae serotype 1 (strain Sd197).